A 414-amino-acid polypeptide reads, in one-letter code: MASGDTLYIATDGSEMPAEIVELHEIEVETIPVETIETTVVGEEEEEDDDDEDGGGGDHGGGGGGHGHAGHHHHHHHHHHHHPPMIALQPLVTDDPTQVHHHQEVILVQTREEVVGGDDSDGLRAEDGFEDQILIPVPAPAGGDDDYIEQTLVTVAAAGKSGGGASSGGGRVKKGGGKKSGKKSYLGGGAGAAGGGGADPGNKKWEQKQVQIKTLEGEFSVTMWSSDEKKDIDHETVVEEQIIGENSPPDYSEYMTGKKLPPGGIPGIDLSDPKQLAEFARMKPRKIKEDDAPRTIACPHKGCTKMFRDNSAMRKHLHTHGPRVHVCAECGKAFVESSKLKRHQLVHTGEKPFQCTFEGCGKRFSLDFNLRTHVRIHTGDRPYVCPFDGCNKKFAQSTNLKSHILTHAKAKNNQ.

The tract at residues 1–170 is interaction with the SMAD1/SMAD4 complex; sequence MASGDTLYIA…SGGGASSGGG (170 aa). Over residues 32–41 the composition is skewed to low complexity; it reads PVETIETTVV. Residues 32–83 form a disordered region; that stretch reads PVETIETTVVGEEEEEDDDDEDGGGGDHGGGGGGHGHAGHHHHHHHHHHHHP. Residues 42–55 show a composition bias toward acidic residues; that stretch reads GEEEEEDDDDEDGG. The span at 57-67 shows a compositional bias: gly residues; sequence GDHGGGGGGHG. Basic residues predominate over residues 68-83; the sequence is HAGHHHHHHHHHHHHP. The tract at residues 118 to 260 is gly-rich region involved in interaction with HCFC1; it reads DDSDGLRAED…YSEYMTGKKL (143 aa). Position 120 is a phosphoserine (Ser120). The segment at 159-203 is disordered; it reads GKSGGGASSGGGRVKKGGGKKSGKKSYLGGGAGAAGGGGADPGNK. Gly residues predominate over residues 160–170; the sequence is KSGGGASSGGG. Over residues 171 to 182 the composition is skewed to basic residues; sequence RVKKGGGKKSGK. Residues Lys182 and Lys183 each participate in a glycyl lysine isopeptide (Lys-Gly) (interchain with G-Cter in SUMO2) cross-link. The segment covering 186-199 has biased composition (gly residues); it reads LGGGAGAAGGGGAD. Glycyl lysine isopeptide (Lys-Gly) (interchain with G-Cter in SUMO2) cross-links involve residues Lys208 and Lys230. Position 247 is a phosphoserine (Ser247). The involved in nuclear matrix association stretch occupies residues 257-341; sequence GKKLPPGGIP…KAFVESSKLK (85 aa). Residues Lys286 and Lys288 each participate in a glycyl lysine isopeptide (Lys-Gly) (interchain with G-Cter in SUMO2) cross-link. Positions 295–414 are binding to DNA; that stretch reads TIACPHKGCT…LTHAKAKNNQ (120 aa). 3 C2H2-type zinc fingers span residues 296–320, 325–347, and 353–377; these read IACPHKGCTKMFRDNSAMRKHLHTH, HVCAECGKAFVESSKLKRHQLVH, and FQCTFEGCGKRFSLDFNLRTHVRIH. 12 residues coordinate Zn(2+): Cys298, Cys303, His316, His320, Cys327, Cys330, His343, His347, Cys355, Cys360, His373, and His377. Residues 333 to 371 are involved in repression of activated transcription; it reads AFVESSKLKRHQLVHTGEKPFQCTFEGCGKRFSLDFNLR. Positions 371 to 397 are involved in masking transactivation domain; that stretch reads RTHVRIHTGDRPYVCPFDGCNKKFAQS. At Thr378 the chain carries Phosphothreonine. Residues 383 to 407 form a C2H2-type 4 zinc finger; sequence YVCPFDGCNKKFAQSTNLKSHILTH. Positions 385, 390, 403, and 407 each coordinate Zn(2+). Glycyl lysine isopeptide (Lys-Gly) (interchain with G-Cter in SUMO2) cross-links involve residues Lys409 and Lys411.

It belongs to the YY transcription factor family. As to quaternary structure, interacts with YAF2 through the region encompassing the first and second zinc fingers. Component of the chromatin remodeling INO80 complex; specifically part of a complex module associated with the DBINO domain of INO80. Interacts with EED and EZH2; the interactions are indicative for an association with the PRC2/EED-EZH2 complex. Found in a complex with SMAD1 and SMAD4. Interacts with SFMBT2. Found in a complex with YY1, SIN3A and HDAC1. Accessory component of the polycomb repressive deubiquitinase (PR-DUB) complex, at least composed of BAP1, one of ASXL1, ASXL2 or (probably) ASXL3 and one of MBD5 or MBD6; the PR-DUB core associates with a number of accessory proteins, including FOXK1, FOXK2, KDM1B, HCFC1, YY1 and OGT. Interacts (via Gly-rich region) with HCFC1; the interaction is direct. Interacts (via C-terminal zinc-finger domains) with BAP1 (via ULD domain); the interaction is direct and requires HCFC1. Post-translationally, transiently poly-ADP-ribosylated by PARP1 upon DNA damage, with the effect of decreasing affinity of YY1 to its cognate DNA binding sites. In terms of processing, ubiquitinated. Phosphorylation at Ser-120 by CK2 prevents proteolytic cleavage by caspase-7 (CASP7) during apoptosis. Post-translationally, proteolytically cleaved by caspase-7 (CASP7) in response to apoptosis. Phosphorylation at Ser-120 protects against proteolytic cleavage. Expressed in ovary and, at lower levels, in testis.

It is found in the nucleus. It localises to the nucleus matrix. The protein localises to the cytoplasm. Multifunctional transcription factor that exhibits positive and negative control on a large number of cellular and viral genes by binding to sites overlapping the transcription start site. Binds to the consensus sequence 5'-CCGCCATNTT-3'; some genes have been shown to contain a longer binding motif allowing enhanced binding; the initial CG dinucleotide can be methylated greatly reducing the binding affinity. The effect on transcription regulation is depending upon the context in which it binds and diverse mechanisms of action include direct activation or repression, indirect activation or repression via cofactor recruitment, or activation or repression by disruption of binding sites or conformational DNA changes. Its activity is regulated by transcription factors and cytoplasmic proteins that have been shown to abrogate or completely inhibit YY1-mediated activation or repression. Binds to the upstream conserved region (UCR) (5'-CGCCATTTT-3') of Moloney murine leukemia virus (MuLV). Acts synergistically with the SMAD1 and SMAD4 in bone morphogenetic protein (BMP)-mediated cardiac-specific gene expression. Binds to SMAD binding elements (SBEs) (5'-GTCT/AGAC-3') within BMP response element (BMPRE) of cardiac activating regions. Proposed to recruit the PRC2/EED-EZH2 complex to target genes that are transcriptional repressed. Involved in DNA repair. In vitro, binds to DNA recombination intermediate structures (Holliday junctions). Involved in spermatogenesis and may play a role in meiotic DNA double-strand break repair. Plays a role in regulating enhancer activation. Recruits the PR-DUB complex to specific gene-regulatory regions. In terms of biological role, proposed core component of the chromatin remodeling INO80 complex which is involved in transcriptional regulation, DNA replication and probably DNA repair; proposed to target the INO80 complex to YY1-responsive elements. The polypeptide is Transcriptional repressor protein YY1 (Yy1) (Mus musculus (Mouse)).